The chain runs to 260 residues: 3'-5' ssDNA/RNA exonuclease TatD (260 aa).

Glutamate 92, histidine 128, and histidine 153 together coordinate a divalent metal cation.

Belongs to the metallo-dependent hydrolases superfamily. TatD-type hydrolase family. TatD subfamily. Monomer. Mg(2+) serves as cofactor.

It is found in the cytoplasm. Functionally, 3'-5' exonuclease that prefers single-stranded DNA and RNA. May play a role in the H(2)O(2)-induced DNA damage repair. The polypeptide is 3'-5' ssDNA/RNA exonuclease TatD (Pectobacterium carotovorum subsp. carotovorum (strain PC1)).